The chain runs to 1217 residues: ATP-dependent helicase/nuclease subunit A (1217 aa).

The UvrD-like helicase ATP-binding domain occupies 10–475 (VIWTDAQWQS…IDLSQNFRSR (466 aa)). 31–38 (AAAGSGKT) contacts ATP. One can recognise a UvrD-like helicase C-terminal domain in the interval 476–786 (KEVLSTTNYI…RMMTIHSSKG (311 aa)).

The protein belongs to the helicase family. AddA subfamily. In terms of assembly, heterodimer of AddA and AddB/RexB. The cofactor is Mg(2+).

It catalyses the reaction Couples ATP hydrolysis with the unwinding of duplex DNA by translocating in the 3'-5' direction.. The enzyme catalyses ATP + H2O = ADP + phosphate + H(+). Functionally, the heterodimer acts as both an ATP-dependent DNA helicase and an ATP-dependent, dual-direction single-stranded exonuclease. Recognizes the chi site generating a DNA molecule suitable for the initiation of homologous recombination. The AddA nuclease domain is required for chi fragment generation; this subunit has the helicase and 3' -&gt; 5' nuclease activities. The protein is ATP-dependent helicase/nuclease subunit A of Staphylococcus aureus (strain NCTC 8325 / PS 47).